The primary structure comprises 486 residues: N-succinylglutamate 5-semialdehyde dehydrogenase (486 aa).

Residue 220–225 (GSSRTG) coordinates NAD(+). Active-site residues include E243 and C277.

It belongs to the aldehyde dehydrogenase family. AstD subfamily.

The enzyme catalyses N-succinyl-L-glutamate 5-semialdehyde + NAD(+) + H2O = N-succinyl-L-glutamate + NADH + 2 H(+). Its pathway is amino-acid degradation; L-arginine degradation via AST pathway; L-glutamate and succinate from L-arginine: step 4/5. Catalyzes the NAD-dependent reduction of succinylglutamate semialdehyde into succinylglutamate. This is N-succinylglutamate 5-semialdehyde dehydrogenase from Shewanella frigidimarina (strain NCIMB 400).